The following is a 122-amino-acid chain: Small ribosomal subunit protein uS13 (122 aa).

The interval 97–122 is disordered; the sequence is PVRGQRTHTNARTRKGPAKAIAGKKK.

This sequence belongs to the universal ribosomal protein uS13 family. Part of the 30S ribosomal subunit. Forms a loose heterodimer with protein S19. Forms two bridges to the 50S subunit in the 70S ribosome.

In terms of biological role, located at the top of the head of the 30S subunit, it contacts several helices of the 16S rRNA. In the 70S ribosome it contacts the 23S rRNA (bridge B1a) and protein L5 of the 50S subunit (bridge B1b), connecting the 2 subunits; these bridges are implicated in subunit movement. Contacts the tRNAs in the A and P-sites. This chain is Small ribosomal subunit protein uS13, found in Brucella abortus (strain S19).